Consider the following 127-residue polypeptide: UPF0102 protein Mmwyl1_2395 (127 aa).

It belongs to the UPF0102 family.

This is UPF0102 protein Mmwyl1_2395 from Marinomonas sp. (strain MWYL1).